The primary structure comprises 147 residues: D-aminoacyl-tRNA deacylase (147 aa).

Positions 136 to 137 (GP) match the Gly-cisPro motif, important for rejection of L-amino acids motif.

Belongs to the DTD family. As to quaternary structure, homodimer.

It localises to the cytoplasm. It catalyses the reaction glycyl-tRNA(Ala) + H2O = tRNA(Ala) + glycine + H(+). The enzyme catalyses a D-aminoacyl-tRNA + H2O = a tRNA + a D-alpha-amino acid + H(+). In terms of biological role, an aminoacyl-tRNA editing enzyme that deacylates mischarged D-aminoacyl-tRNAs. Also deacylates mischarged glycyl-tRNA(Ala), protecting cells against glycine mischarging by AlaRS. Acts via tRNA-based rather than protein-based catalysis; rejects L-amino acids rather than detecting D-amino acids in the active site. By recycling D-aminoacyl-tRNA to D-amino acids and free tRNA molecules, this enzyme counteracts the toxicity associated with the formation of D-aminoacyl-tRNA entities in vivo and helps enforce protein L-homochirality. The chain is D-aminoacyl-tRNA deacylase from Streptococcus sanguinis (strain SK36).